Reading from the N-terminus, the 330-residue chain is Glycerol-3-phosphate dehydrogenase [NAD(P)+] (330 aa).

4 residues coordinate NADPH: serine 14, phenylalanine 15, arginine 35, and lysine 109. The sn-glycerol 3-phosphate site is built by lysine 109 and glycine 137. NADPH is bound at residue alanine 141. Sn-glycerol 3-phosphate is bound by residues lysine 192, aspartate 248, serine 258, arginine 259, and asparagine 260. The active-site Proton acceptor is lysine 192. Arginine 259 provides a ligand contact to NADPH. The NADPH site is built by leucine 283 and glutamate 285.

It belongs to the NAD-dependent glycerol-3-phosphate dehydrogenase family.

The protein resides in the cytoplasm. It carries out the reaction sn-glycerol 3-phosphate + NAD(+) = dihydroxyacetone phosphate + NADH + H(+). The enzyme catalyses sn-glycerol 3-phosphate + NADP(+) = dihydroxyacetone phosphate + NADPH + H(+). It functions in the pathway membrane lipid metabolism; glycerophospholipid metabolism. In terms of biological role, catalyzes the reduction of the glycolytic intermediate dihydroxyacetone phosphate (DHAP) to sn-glycerol 3-phosphate (G3P), the key precursor for phospholipid synthesis. This Rickettsia massiliae (strain Mtu5) protein is Glycerol-3-phosphate dehydrogenase [NAD(P)+].